Consider the following 430-residue polypeptide: MKLKINSQGLKGRLKVPGDKSISHRSIMFGSIAKGKTIIHDILRGEDVLSTIEAFRALGVEIEDDGQVITVHGQGISKLKEPEKALDMGNSGTSTRLLSGILAGLPFEATLFGDDSLSKRPMDRVATPLQMMGAEIVGQTDKVKLPMTIKGSAHLKAIDYILPVASAQVKSAVIFAALQAEGLTKVVEKEKTRSHTEEMLVQFGGEITVSDKTILVPGGQKLLGQEVTVPGDISSAAFWLVAGLVVENSGLILENVGINETRTGILEVIQAMGGQLEILEQDEVAKAATLKVKASQLKGTEISGDLIPRLIDELPIIALLATQAEGKTIIRDAAELKVKETDRIAVVADALNSMGANIEPTDDGMIIQGGTKLHAPENAINTLGDHRIGMMVAIAALLVENGEIELERAEAIQTSYPSFFDDLEKLSGNL.

3-phosphoshikimate contacts are provided by Lys-20, Ser-21, and Arg-25. Residue Lys-20 participates in phosphoenolpyruvate binding. The phosphoenolpyruvate site is built by Gly-92 and Arg-120. 4 residues coordinate 3-phosphoshikimate: Ser-166, Gln-168, Asp-312, and Lys-339. Gln-168 serves as a coordination point for phosphoenolpyruvate. Asp-312 acts as the Proton acceptor in catalysis. Phosphoenolpyruvate contacts are provided by Arg-343 and Arg-387.

The protein belongs to the EPSP synthase family. As to quaternary structure, monomer.

It localises to the cytoplasm. It carries out the reaction 3-phosphoshikimate + phosphoenolpyruvate = 5-O-(1-carboxyvinyl)-3-phosphoshikimate + phosphate. It participates in metabolic intermediate biosynthesis; chorismate biosynthesis; chorismate from D-erythrose 4-phosphate and phosphoenolpyruvate: step 6/7. Catalyzes the transfer of the enolpyruvyl moiety of phosphoenolpyruvate (PEP) to the 5-hydroxyl of shikimate-3-phosphate (S3P) to produce enolpyruvyl shikimate-3-phosphate and inorganic phosphate. The chain is 3-phosphoshikimate 1-carboxyvinyltransferase from Lactococcus lactis subsp. cremoris (strain MG1363).